Consider the following 105-residue polypeptide: Thioredoxin (105 aa).

Positions 2–105 (VKLIESKEAF…KLEATITEFA (104 aa)) constitute a Thioredoxin domain. Residue lysine 3 is modified to N6-acetyllysine. Lysine 8 is subject to N6-succinyllysine. Catalysis depends on nucleophile residues cysteine 32 and cysteine 35. Cysteine 32 and cysteine 35 are joined by a disulfide. Lysine 39 carries the N6-acetyllysine modification. An S-nitrosocysteine mark is found at cysteine 62 and cysteine 69. Cysteine 73 is subject to S-nitrosocysteine; alternate. Position 94 is an N6-acetyllysine; alternate (lysine 94). Lysine 94 is subject to N6-succinyllysine; alternate.

The protein belongs to the thioredoxin family. Homodimer; disulfide-linked. Interacts with TXNIP through the redox-active site. Interacts with MAP3K5 and CASP3. Interacts with APEX1; the interaction stimulates the FOS/JUN AP-1 DNA-binding activity in a redox-dependent manner. In the fully reduced protein, both Cys-69 and Cys-73 are nitrosylated in response to nitric oxide (NO). When two disulfide bonds are present in the protein, only Cys-73 is nitrosylated. Cys-73 can serve as donor for nitrosylation of target proteins.

The protein localises to the nucleus. Its subcellular location is the cytoplasm. It localises to the secreted. Its function is as follows. Participates in various redox reactions through the reversible oxidation of its active center dithiol to a disulfide and catalyzes dithiol-disulfide exchange reactions. Plays a role in the reversible S-nitrosylation of cysteine residues in target proteins, and thereby contributes to the response to intracellular nitric oxide. Nitrosylates the active site Cys of CASP3 in response to nitric oxide (NO), and thereby inhibits caspase-3 activity. Induces the FOS/JUN AP-1 DNA binding activity in ionizing radiation (IR) cells through its oxidation/reduction status and stimulates AP-1 transcriptional activity. In Rattus norvegicus (Rat), this protein is Thioredoxin (Txn).